Here is a 159-residue protein sequence, read N- to C-terminus: Aphid transmission protein (159 aa).

This sequence belongs to the caulimoviridae ORF II family.

This protein is involved in virus transmission. This Cauliflower mosaic virus (strain CM-1841) (CaMV) protein is Aphid transmission protein.